The following is a 167-amino-acid chain: uncharacterized protein (167 aa).

The disordered stretch occupies residues Ser115–Lys167.

This is an uncharacterized protein from Homo sapiens (Human).